The sequence spans 164 residues: Cytochrome c-type biogenesis protein CcmE (164 aa).

Topologically, residues methionine 1 to arginine 8 are cytoplasmic. The chain crosses the membrane as a helical; Signal-anchor for type II membrane protein span at residues leucine 9–alanine 29. Topologically, residues leucine 30 to leucine 164 are periplasmic. Histidine 130 and tyrosine 134 together coordinate heme. Residues glutamate 140–leucine 164 form a disordered region.

The protein belongs to the CcmE/CycJ family.

The protein resides in the cell inner membrane. In terms of biological role, heme chaperone required for the biogenesis of c-type cytochromes. Transiently binds heme delivered by CcmC and transfers the heme to apo-cytochromes in a process facilitated by CcmF and CcmH. This chain is Cytochrome c-type biogenesis protein CcmE, found in Yersinia pseudotuberculosis serotype O:3 (strain YPIII).